Reading from the N-terminus, the 308-residue chain is Ribosomal RNA large subunit methyltransferase F (308 aa).

The protein belongs to the methyltransferase superfamily. METTL16/RlmF family.

The protein resides in the cytoplasm. It carries out the reaction adenosine(1618) in 23S rRNA + S-adenosyl-L-methionine = N(6)-methyladenosine(1618) in 23S rRNA + S-adenosyl-L-homocysteine + H(+). Specifically methylates the adenine in position 1618 of 23S rRNA. In Escherichia coli O6:H1 (strain CFT073 / ATCC 700928 / UPEC), this protein is Ribosomal RNA large subunit methyltransferase F.